A 119-amino-acid polypeptide reads, in one-letter code: MHILDTVDAASLRTDVPQFRAGDTLKVHVNIIEGKNSRVQVFQGFVLGRQGDGIRETFTVRKVSFGVGVERTFPVHSPIIDKIEVVTKGDVRRAKLYYMRALRGKAAKIKEKRDFSTAK.

Belongs to the bacterial ribosomal protein bL19 family.

This protein is located at the 30S-50S ribosomal subunit interface and may play a role in the structure and function of the aminoacyl-tRNA binding site. The chain is Large ribosomal subunit protein bL19 from Arthrobacter sp. (strain FB24).